We begin with the raw amino-acid sequence, 122 residues long: Large ribosomal subunit protein uL14 (122 aa).

Belongs to the universal ribosomal protein uL14 family. Part of the 50S ribosomal subunit. Forms a cluster with proteins L3 and L19. In the 70S ribosome, L14 and L19 interact and together make contacts with the 16S rRNA in bridges B5 and B8.

In terms of biological role, binds to 23S rRNA. Forms part of two intersubunit bridges in the 70S ribosome. The protein is Large ribosomal subunit protein uL14 of Chloroherpeton thalassium (strain ATCC 35110 / GB-78).